A 590-amino-acid chain; its full sequence is MRTHYADKVDSSLIDQTITLCGWVHRRRDHGGLIFIDLRDREGLVQVVCNPTESTVFKVAESLRNEYVIKVTGKVHKRPEGTVNPHIPSGEVEIAASDITLLNKSKPLPFNIDEYQEVSEEVRLKFRYLDLRRPEVAQRLKMRSYIIREIRRFLDERGFLDIETPMLTKSTPEGARDYLVPSRTHPGQFFALPQSPQIFKEILMVAGFDRYYQIVRCFRDEDLRADRQPEFTQLDLEMSFVEEKDIQQLMETMIRHLFSTFLNVPLPDPFPRITYDEAIKTYGTDRPDLRNPLTLVDVTDLMKSVEFKVFKEPANNPHGRIAVLRLPKGAELSRKAIDDYTQFVGIYGAKGLAYIKVENIDNGTGGLHSPILKFLPENVIAEILKRTQAQSGDILFFGADKAKIVNESLGALRDRLCADLNLYEGQWKPVWVVDFPMFDREDVGDWQALHHPFTALQETDPEKVIANPGDVLSRAYDMVLNGSEIGGGSIRINDIGMQYAVFKVLGISKEMAEAQFGHLLMALQFGSPPLGGIAFGLDRLVAIMTGASSIRDVIAFPKTQTAQCPLTNAPAQVETLQLETLGLKVSKHRK.

Glutamate 173 contributes to the L-aspartate binding site. An aspartate region spans residues 197–200 (QIFK). Arginine 219 serves as a coordination point for L-aspartate. Residues 219 to 221 (RDE) and glutamine 228 each bind ATP. Histidine 450 contacts L-aspartate. Glutamate 484 lines the ATP pocket. Arginine 491 lines the L-aspartate pocket. 536–539 (GLDR) contributes to the ATP binding site.

This sequence belongs to the class-II aminoacyl-tRNA synthetase family. Type 1 subfamily. Homodimer.

The protein localises to the cytoplasm. The catalysed reaction is tRNA(Asx) + L-aspartate + ATP = L-aspartyl-tRNA(Asx) + AMP + diphosphate. Its function is as follows. Aspartyl-tRNA synthetase with relaxed tRNA specificity since it is able to aspartylate not only its cognate tRNA(Asp) but also tRNA(Asn). Reaction proceeds in two steps: L-aspartate is first activated by ATP to form Asp-AMP and then transferred to the acceptor end of tRNA(Asp/Asn). The polypeptide is Aspartate--tRNA(Asp/Asn) ligase (Coxiella burnetii (strain RSA 331 / Henzerling II)).